We begin with the raw amino-acid sequence, 430 residues long: Asparagine--tRNA ligase (430 aa).

The protein belongs to the class-II aminoacyl-tRNA synthetase family.

It is found in the cytoplasm. It catalyses the reaction tRNA(Asn) + L-asparagine + ATP = L-asparaginyl-tRNA(Asn) + AMP + diphosphate + H(+). This chain is Asparagine--tRNA ligase, found in Thermococcus gammatolerans (strain DSM 15229 / JCM 11827 / EJ3).